The primary structure comprises 1101 residues: Rho GTPase-activating protein 30 (1101 aa).

The Rho-GAP domain maps to 20-215 (CDLREHLQHS…FILTHVDQLF (196 aa)). 2 disordered regions span residues 305–397 (RKLP…VRAL) and 450–499 (LQPR…LEDS). A compositionally biased stretch (basic and acidic residues) spans 309–319 (LRVEDREEKSS). The span at 348–367 (SSSSQPSSLMPESLESNSME) shows a compositional bias: low complexity. The segment covering 451 to 465 (QPRPSPALGPGPPGS) has biased composition (pro residues). S578 carries the phosphoserine modification. Residues 622–848 (LGPKPINWEG…EQKSIDVETE (227 aa)) form a disordered region. Basic and acidic residues-rich tracts occupy residues 659–677 (TRQEKEAKPRSTSDNREEA), 686–762 (EAGK…KGDD), 786–821 (EVVHKHEAEKGRESETKELRRKSDLKSREDQGHSED), and 829–844 (DDRKEGVFSKEQKSID). S875 bears the Phosphoserine mark. Disordered regions lie at residues 878-901 (EINEQTSEMKQAPLQPSEPEGMEA) and 968-987 (CPRPGRLDGTPGEKAWGSRA). S996 carries the phosphoserine modification. Positions 1044–1076 (SRPLSCLERPPEGTEGSEPRSRLSLPPRELHPV) are disordered. Basic and acidic residues predominate over residues 1052-1064 (RPPEGTEGSEPRS).

Interacts with RHOU in a GTP-independent manner.

The protein resides in the cytoplasmic vesicle. Its function is as follows. GTPase-activating protein (GAP) for RAC1 and RHOA, but not for CDC42. In Mus musculus (Mouse), this protein is Rho GTPase-activating protein 30 (Arhgap30).